Here is a 1638-residue protein sequence, read N- to C-terminus: DNA polymerase III PolC-type (1638 aa).

A disordered region spans residues 193–212 (SEIKKQRSEERESKNTREAK). Basic and acidic residues predominate over residues 194–212 (EIKKQRSEERESKNTREAK). One can recognise an Exonuclease domain in the interval 596 to 752 (YVVFDVETTG…FDAEATGRLL (157 aa)).

Belongs to the DNA polymerase type-C family. PolC subfamily.

It is found in the cytoplasm. It catalyses the reaction DNA(n) + a 2'-deoxyribonucleoside 5'-triphosphate = DNA(n+1) + diphosphate. Its function is as follows. Required for replicative DNA synthesis. This DNA polymerase also exhibits 3' to 5' exonuclease activity. This Lactococcus lactis subsp. lactis (strain IL1403) (Streptococcus lactis) protein is DNA polymerase III PolC-type.